The following is a 449-amino-acid chain: Asparagine--tRNA ligase (449 aa).

This sequence belongs to the class-II aminoacyl-tRNA synthetase family. As to quaternary structure, homodimer.

The protein resides in the cytoplasm. It catalyses the reaction tRNA(Asn) + L-asparagine + ATP = L-asparaginyl-tRNA(Asn) + AMP + diphosphate + H(+). This is Asparagine--tRNA ligase from Mesomycoplasma hyopneumoniae (strain 232) (Mycoplasma hyopneumoniae).